Here is a 602-residue protein sequence, read N- to C-terminus: Bifunctional ribose 1,5-bisphosphokinase-thymidine phosphorylase (602 aa).

The interval 1–187 is ribose 1,5-bisphosphokinase; sequence MKESGTFFLV…ALRNGANAGS (187 aa). A thymidinephosphorylase region spans residues 188-602; the sequence is VPQPASRRHL…ASTAVRVDPD (415 aa).

The protein in the N-terminal section; belongs to the ribose 1,5-bisphosphokinase family. In the C-terminal section; belongs to the thymidine/pyrimidine-nucleoside phosphorylase family. Type 2 subfamily.

The catalysed reaction is alpha-D-ribose 1,5-bisphosphate + ATP = 5-phospho-alpha-D-ribose 1-diphosphate + ADP. It catalyses the reaction thymidine + phosphate = 2-deoxy-alpha-D-ribose 1-phosphate + thymine. Its pathway is metabolic intermediate biosynthesis; 5-phospho-alpha-D-ribose 1-diphosphate biosynthesis; 5-phospho-alpha-D-ribose 1-diphosphate from D-ribose 5-phosphate (route II): step 3/3. In terms of biological role, catalyzes the phosphorylation of ribose 1,5-bisphosphate to 5-phospho-D-ribosyl alpha-1-diphosphate (PRPP). In Cupriavidus pinatubonensis (strain JMP 134 / LMG 1197) (Cupriavidus necator (strain JMP 134)), this protein is Bifunctional ribose 1,5-bisphosphokinase-thymidine phosphorylase (phnN).